Reading from the N-terminus, the 323-residue chain is Small ribosomal subunit protein uS3 (323 aa).

The KH type-2 domain occupies 17–86 (IDEFFADELG…DPQIDVQEVD (70 aa)). Residues 251 to 303 (ADPGVSSEDEEVVTEPVDIGGDDEDVEDIEVVSDDSGNDTETVAEEVEELDAE) are disordered. The span at 270-303 (GGDDEDVEDIEVVSDDSGNDTETVAEEVEELDAE) shows a compositional bias: acidic residues.

This sequence belongs to the universal ribosomal protein uS3 family. Part of the 30S ribosomal subunit.

Its function is as follows. Binds the lower part of the 30S subunit head. This Haloquadratum walsbyi (strain DSM 16790 / HBSQ001) protein is Small ribosomal subunit protein uS3.